Reading from the N-terminus, the 699-residue chain is Elongation factor G (699 aa).

The tr-type G domain maps to 8 to 288 (EDYRNFGIMA…AVVDYLPSPV (281 aa)). GTP-binding positions include 17–24 (AHIDAGKT), 86–90 (DTPGH), and 140–143 (NKMD).

It belongs to the TRAFAC class translation factor GTPase superfamily. Classic translation factor GTPase family. EF-G/EF-2 subfamily.

The protein localises to the cytoplasm. Catalyzes the GTP-dependent ribosomal translocation step during translation elongation. During this step, the ribosome changes from the pre-translocational (PRE) to the post-translocational (POST) state as the newly formed A-site-bound peptidyl-tRNA and P-site-bound deacylated tRNA move to the P and E sites, respectively. Catalyzes the coordinated movement of the two tRNA molecules, the mRNA and conformational changes in the ribosome. The chain is Elongation factor G from Sinorhizobium medicae (strain WSM419) (Ensifer medicae).